Here is a 443-residue protein sequence, read N- to C-terminus: Phosphatidate cytidylyltransferase 2 (443 aa).

The segment covering 1-38 has biased composition (basic and acidic residues); that stretch reads MTELRQRAVREDAPPEDKESESEAKLDGETASDSESRA. The disordered stretch occupies residues 1–51; it reads MTELRQRAVREDAPPEDKESESEAKLDGETASDSESRAETAPPPTSIDDTP. Residue Ser20 is modified to Phosphoserine. Thr30 bears the Phosphothreonine mark. 3 positions are modified to phosphoserine: Ser32, Ser34, and Ser36. Residue Thr50 is modified to Phosphothreonine. Transmembrane regions (helical) follow at residues 78–98, 129–149, 165–185, 212–232, 261–281, and 338–358; these read MIAFFFIIIYLGPMVLMMIVM, WYFLLCVNYFFYGETVTDYFF, HRFISFTLYLTGFCMFVLSLV, LVIHNLFEGMIWFIVPISCVI, GFIGGFFATVVFGLLLSYVMS, and SALSTFASLIGPFGGFFASGF.

It belongs to the CDS family. As to quaternary structure, homodimer.

The protein resides in the endoplasmic reticulum membrane. The catalysed reaction is a 1,2-diacyl-sn-glycero-3-phosphate + CTP + H(+) = a CDP-1,2-diacyl-sn-glycerol + diphosphate. It carries out the reaction 1-octadecanoyl-2-(5Z,8Z,11Z,14Z-eicosatetraenoyl)-sn-glycero-3-phosphate + CTP + H(+) = 1-octadecanoyl-2-(5Z,8Z,11Z,14Z-eicosatetraenoyl)-sn-glycero-3-cytidine-5'-diphosphate + diphosphate. It catalyses the reaction 1-octadecanoyl-2-(9Z,12Z-octadecadienoyl)-sn-glycero-3-phosphate + CTP + H(+) = 1-octadecanoyl-2-(9Z,12Z-octadecadienoyl)-sn-glycero-3-cytidine-5'-diphosphate + diphosphate. The enzyme catalyses 1-hexadecanoyl-2-(5Z,8Z,11Z,14Z-eicosatetraenoyl)-sn-glycero-3-phosphate + CTP + H(+) = 1-hexadecanoyl-2-(5Z,8Z,11Z,14Z-eicosatetraenoyl)-sn-glycero-3-cytidine-5'-diphosphate + diphosphate. The catalysed reaction is 1,2-di-(5Z,8Z,11Z,14Z)-eicosatetraenoyl-sn-glycero-3-phosphate + CTP + H(+) = 1,2-di-(5Z,8Z,11Z,14Z-eicosatetraenoyl)-sn-glycero-3-cytidine-5'-diphosphate + diphosphate. It carries out the reaction 1-octadecanoyl-2-(9Z-octadecenoyl)-sn-glycero-3-phosphate + CTP + H(+) = 1-octadecanoyl-2-(9Z-octadecenoyl)-sn-glycero-3-cytidine-5'-diphosphate + diphosphate. It catalyses the reaction 1-octadecanoyl-2-(4Z,7Z,10Z,13Z,16Z,19Z-docosahexaenoyl)-sn-glycero-3-phosphate + CTP + H(+) = 1-octadecanoyl-2-(4Z,7Z,10Z,13Z,16Z,19Z-docosahexaenoyl)-sn-glycero-3-cytidine-5'-diphosphate + diphosphate. The enzyme catalyses 1,2-di-(9Z,12Z-octadecadienoyl)-sn-glycero-3-phosphate + CTP + H(+) = 1,2-di-(9Z,12Z-octadecadienoyl)-sn-glycero-3-cytidine-5'-diphosphate + diphosphate. The catalysed reaction is 1,2-di-(9Z-octadecenoyl)-sn-glycero-3-phosphate + CTP + H(+) = 1,2-di-(9Z-octadecenoyl)-sn-glycero-3-cytidine-5'-diphosphate + diphosphate. The protein operates within phospholipid metabolism; CDP-diacylglycerol biosynthesis; CDP-diacylglycerol from sn-glycerol 3-phosphate: step 3/3. In terms of biological role, catalyzes the conversion of phosphatidic acid (PA) to CDP-diacylglycerol (CDP-DAG), an essential intermediate in the synthesis of phosphatidylglycerol, cardiolipin and phosphatidylinositol. Exhibits specificity for the nature of the acyl chains at the sn-1 and sn-2 positions in the substrate, PA and the preferred acyl chain composition is 1-stearoyl-2-arachidonoyl-sn-phosphatidic acid. Plays an important role in regulating the growth and maturation of lipid droplets which are storage organelles at the center of lipid and energy homeostasis. The chain is Phosphatidate cytidylyltransferase 2 from Rattus norvegicus (Rat).